Reading from the N-terminus, the 325-residue chain is uncharacterized protein (325 aa).

The interval 296–325 (QRTLSSSMEEADRPRRMSVTQPHLPPVPSA) is disordered.

The protein belongs to the NDRG family.

This is an uncharacterized protein from Caenorhabditis elegans.